Reading from the N-terminus, the 521-residue chain is MPSLLSSRIRNAEFAKKIVTDPAKLVPYFKNGDYVGWSGFTGVGYPKMIPNALARHVEENNLQGKLRFKLFVGASGGADTECKWAELNMIERRCPHQVGKPISKGINSGRIQFFDKHLSMFPQDLLYGYYTRNRESNTIDTAIIEATAITEDGGIVPGASVGASPELMQLAEKIIIEVNTAIPSFEGLHDIVEIPNPPHRTPININRVDDRIGKPYIKVDPKKVIGIVEADYGDITCANSPQDETSQAIAGHLVDFFHHEVSVGRLPKNLHPLQSGIGNIANAIIGGLAHSPFKDLEVWTEVLQDTFLPLFDSEKLRFATATSTRFSPQGFEKFYSNYDYYKERILLRPQVISNHPEIIRRLGCIAMNTPVEADIYAHANSTNVLGSRMLNGLGGSADFLRNAKLSIMHTPSVRPSKKDPTGITCIVPMATHVDQTEHDLDILVTEQGLADLRGLSPTERAREVIDKCAHPDYKPLLREYFDIAENYCLARGAGHEPHILANAFKMQLNLLEKGTMKIDHW.

A CoA-binding site is contributed by Gly-276–Ile-280. Glu-301 acts as the 5-glutamyl coenzyme A thioester intermediate in catalysis. Positions 391 and 395 each coordinate CoA.

Belongs to the acetyl-CoA hydrolase/transferase family.

It localises to the cytoplasm. It carries out the reaction acetyl-CoA + H2O = acetate + CoA + H(+). Functionally, presumably involved in regulating the intracellular acetyl-CoA pool for fatty acid and cholesterol synthesis and fatty acid oxidation. The sequence is that of Acetyl-CoA hydrolase (ach1) from Schizosaccharomyces pombe (strain 972 / ATCC 24843) (Fission yeast).